The primary structure comprises 464 residues: Tryprostatin B synthase (464 aa).

2 residues coordinate brevianamide F: Met94 and Glu102. Residues Arg113, Lys201, and Tyr203 each contribute to the dimethylallyl diphosphate site. Brevianamide F is bound at residue Tyr205. Dimethylallyl diphosphate is bound by residues Lys294, Tyr296, Gln380, Tyr382, Tyr446, and Tyr450.

The protein belongs to the tryptophan dimethylallyltransferase family.

It carries out the reaction brevianamide F + dimethylallyl diphosphate = tryprostatin B + diphosphate. It functions in the pathway mycotoxin biosynthesis. Its function is as follows. Brevianamide F prenyltransferase; part of the gene cluster that mediates the biosynthesis of fumitremorgins, indole alkaloids that carry not only intriguing chemical structures, but also interesting biological and pharmacological activities. The biosynthesis of fumitremorgin-type alkaloids begins by condensation of the two amino acids L-tryptophan and L-proline to brevianamide F, catalyzed by the non-ribosomal peptide synthetase ftmA. Brevianamide F is then prenylated by the prenyltransferase ftmPT1/ftmB in the presence of dimethylallyl diphosphate, resulting in the formation of tryprostatin B. The three cytochrome P450 monooxygenases, ftmP450-1/ftmC, ftmP450-2/ftmE and ftmP450-3/FtmG, are responsible for the conversion of tryprostatin B to 6-hydroxytryprostatin B, tryprostatin A to fumitremorgin C and fumitremorgin C to 12,13-dihydroxyfumitremorgin C, respectively. The putative methyltransferase ftmMT/ftmD is expected for the conversion of 6-hydroxytryprostatin B to tryprostatin A. FtmPT2/FtmH catalyzes the prenylation of 12,13-dihydroxyfumitre-morgin C in the presence of dimethylallyl diphosphate, resulting in the formation of fumitremorgin B. Fumitremorgin B is further converted to verruculogen by ftmOx1/ftmF via the insertion of an endoperoxide bond between the two prenyl moieties. In some fungal species, verruculogen is further converted to fumitremorgin A, but the enzymes involved in this step have not been identified yet. The chain is Tryprostatin B synthase from Aspergillus fumigatus (Neosartorya fumigata).